The following is a 370-amino-acid chain: MKERDVNDAQETPPPLEGKVSAGVLAVVVYAAAFASDRWIPNSLLSLPLLIATLIAAIVTWWGVPKLRGLKLGQVIREEGPQAHLTKSGTPTMGGLLVVPVGVIVGGLISWSGQAAEQLLAVAFITLAYMVVGGIDDWRSLTKHTNTGLTPRGKLLLQALAAVIFLIWAGMRGWISGDVALPFDINLPLNWLIWPLAVFVFLAESNATNLTDGLDGLAAGCGALVFTGMALQLTLRGNSGDPSLAGFCMAMAGCWIGFLVHNRNPAKVFMGDTGSLAMGGALTAVALLTNSLWPLLIMGGIFLAESLSVIIQVWVFKATKGADGIGRRVFRMSPLHHHFELGGTPEQLVVPGFWLATVFLVLIGIFFKPN.

The next 11 helical transmembrane spans lie at 15–35, 44–64, 93–113, 115–135, 155–175, 183–203, 213–233, 240–260, 268–288, 296–316, and 347–367; these read PLEG…AAFA, LLSL…WWGV, MGGL…SWSG, AAEQ…VGGI, LLLQ…RGWI, FDIN…VFLA, GLDG…ALQL, GDPS…GFLV, VFMG…VALL, LIMG…VWVF, and QLVV…GIFF.

This sequence belongs to the glycosyltransferase 4 family. MraY subfamily. It depends on Mg(2+) as a cofactor.

It is found in the cell inner membrane. The catalysed reaction is UDP-N-acetyl-alpha-D-muramoyl-L-alanyl-gamma-D-glutamyl-meso-2,6-diaminopimeloyl-D-alanyl-D-alanine + di-trans,octa-cis-undecaprenyl phosphate = di-trans,octa-cis-undecaprenyl diphospho-N-acetyl-alpha-D-muramoyl-L-alanyl-D-glutamyl-meso-2,6-diaminopimeloyl-D-alanyl-D-alanine + UMP. Its pathway is cell wall biogenesis; peptidoglycan biosynthesis. Functionally, catalyzes the initial step of the lipid cycle reactions in the biosynthesis of the cell wall peptidoglycan: transfers peptidoglycan precursor phospho-MurNAc-pentapeptide from UDP-MurNAc-pentapeptide onto the lipid carrier undecaprenyl phosphate, yielding undecaprenyl-pyrophosphoryl-MurNAc-pentapeptide, known as lipid I. The chain is Phospho-N-acetylmuramoyl-pentapeptide-transferase from Synechococcus sp. (strain CC9311).